The primary structure comprises 364 residues: Aminomethyltransferase (364 aa).

This sequence belongs to the GcvT family. The glycine cleavage system is composed of four proteins: P, T, L and H.

The catalysed reaction is N(6)-[(R)-S(8)-aminomethyldihydrolipoyl]-L-lysyl-[protein] + (6S)-5,6,7,8-tetrahydrofolate = N(6)-[(R)-dihydrolipoyl]-L-lysyl-[protein] + (6R)-5,10-methylene-5,6,7,8-tetrahydrofolate + NH4(+). Its function is as follows. The glycine cleavage system catalyzes the degradation of glycine. The chain is Aminomethyltransferase from Klebsiella pneumoniae subsp. pneumoniae (strain ATCC 700721 / MGH 78578).